The sequence spans 1940 residues: Myosin-13 (1940 aa).

A Myosin N-terminal SH3-like domain is found at 33-82 (DSKKACFAMDDKEMYVKGMIQSRENDKVTVKTLDDRTLTLNSDQVFPMNP). In terms of domain architecture, Myosin motor spans 86–782 (DKIEDMAMMT…LLGLLEEMRD (697 aa)). Residue Lys-130 is modified to N6,N6,N6-trimethyllysine. 179 to 186 (GESGAGKT) lines the ATP pocket. Actin-binding stretches follow at residues 659–681 (LNKL…IPNE) and 761–775 (RFGH…GLLG). Residues 785–814 (LVTLMTRTQAICRGYLMRVEFKKMMERRES) enclose the IQ domain. Residues 843–1940 (LLKSAEAERE…RDVGAQKMEE (1098 aa)) are a coiled coil. The interval 1886–1940 (RQAEEAEEQANTQMSKCRRVQHELEEAEERADIAESQVNKLRAKSRDVGAQKMEE) is disordered. Positions 1929–1940 (KSRDVGAQKMEE) are enriched in basic and acidic residues.

Belongs to the TRAFAC class myosin-kinesin ATPase superfamily. Myosin family. Muscle myosin is a hexameric protein that consists of 2 heavy chain subunits (MHC), 2 alkali light chain subunits (MLC) and 2 regulatory light chain subunits (MLC-2).

The protein resides in the cytoplasm. Its subcellular location is the myofibril. Its function is as follows. Fast twitching myosin mediating the high-velocity and low-tension contractions of specific striated muscles. The protein is Myosin-13 (MYH13) of Canis lupus familiaris (Dog).